The sequence spans 504 residues: 13S globulin seed storage protein 2 (504 aa).

An N-terminal signal peptide occupies residues 1 to 20; the sequence is MSTKLILSFSLCLMVLSCSA. 2 cysteine pairs are disulfide-bonded: Cys46–Cys79 and Cys122–Cys320. Residues 51-265 form the Cupin type-1 1 domain; sequence LTASEPSRRV…FRDVDRETIS (215 aa). Disordered regions lie at residues 128–158, 214–237, and 289–314; these read SDSE…GDQH, GQSQ…DDEA, and QDFE…RSNG. Basic and acidic residues-rich tracts occupy residues 144–158 and 218–231; these read RQSE…GDQH and RETR…QSRE. The 150-residue stretch at 326 to 475 folds into the Cupin type-1 2 domain; it reads RNFNTPTNTY…SYDISTKEAY (150 aa).

It belongs to the 11S seed storage protein (globulins) family. In terms of assembly, hexamer; each subunit is composed of an acidic and a basic chain derived from a single precursor and linked by a disulfide bond.

Seed storage protein. This Fagopyrum esculentum (Common buckwheat) protein is 13S globulin seed storage protein 2 (FA18).